A 304-amino-acid polypeptide reads, in one-letter code: Sulfate adenylyltransferase subunit 2 (304 aa).

Belongs to the PAPS reductase family. CysD subfamily. Heterodimer composed of CysD, the smaller subunit, and CysN.

It carries out the reaction sulfate + ATP + H(+) = adenosine 5'-phosphosulfate + diphosphate. It participates in sulfur metabolism; hydrogen sulfide biosynthesis; sulfite from sulfate: step 1/3. Its function is as follows. With CysN forms the ATP sulfurylase (ATPS) that catalyzes the adenylation of sulfate producing adenosine 5'-phosphosulfate (APS) and diphosphate, the first enzymatic step in sulfur assimilation pathway. APS synthesis involves the formation of a high-energy phosphoric-sulfuric acid anhydride bond driven by GTP hydrolysis by CysN coupled to ATP hydrolysis by CysD. This is Sulfate adenylyltransferase subunit 2 from Acinetobacter baumannii (strain SDF).